We begin with the raw amino-acid sequence, 424 residues long: Arginine ADP-riboxanase OspC4 (424 aa).

Positions 85, 86, 87, 91, 104, 114, 130, 148, 153, 173, and 268 each coordinate NAD(+). Glu-268 is an active-site residue. ANK repeat units lie at residues 311–340, 355–386, and 393–422; these read MAHQALAYSLGNKKADIALYLLSKFNFTKQ, NLYDVEYLLSKDGANYKVLEYFINNGLVDVNK, and SGDTMLDNAMKSKDSKMIDFFIKKWSGIRQ.

This sequence belongs to the OspC family.

Its subcellular location is the secreted. The protein localises to the host cytoplasm. The enzyme catalyses L-arginyl-[protein] + NAD(+) = ADP-riboxanated L-argininyl-[protein] + nicotinamide + NH4(+) + H(+). In terms of biological role, ADP-riboxanase effector that mediates arginine ADP-riboxanation of host caspase CASP4/CASP11, thereby inhibiting pyroptosis. In Shigella flexneri, this protein is Arginine ADP-riboxanase OspC4.